A 476-amino-acid polypeptide reads, in one-letter code: NADH-quinone oxidoreductase subunit N (476 aa).

A run of 14 helical transmembrane segments spans residues A10–I30, L42–I62, F77–L97, A108–I128, A129–R149, F162–F182, L202–F222, P234–V254, W268–I288, L296–T316, V323–A343, A368–V388, Y392–A412, and A445–I465.

Belongs to the complex I subunit 2 family. NDH-1 is composed of 14 different subunits. Subunits NuoA, H, J, K, L, M, N constitute the membrane sector of the complex.

It localises to the cell inner membrane. It catalyses the reaction a quinone + NADH + 5 H(+)(in) = a quinol + NAD(+) + 4 H(+)(out). NDH-1 shuttles electrons from NADH, via FMN and iron-sulfur (Fe-S) centers, to quinones in the respiratory chain. The immediate electron acceptor for the enzyme in this species is believed to be ubiquinone. Couples the redox reaction to proton translocation (for every two electrons transferred, four hydrogen ions are translocated across the cytoplasmic membrane), and thus conserves the redox energy in a proton gradient. In Azorhizobium caulinodans (strain ATCC 43989 / DSM 5975 / JCM 20966 / LMG 6465 / NBRC 14845 / NCIMB 13405 / ORS 571), this protein is NADH-quinone oxidoreductase subunit N.